The sequence spans 599 residues: Aspartate--tRNA(Asp/Asn) ligase (599 aa).

An L-aspartate-binding site is contributed by E183. The segment at 207-210 (QIFK) is aspartate. R229 is an L-aspartate binding site. ATP contacts are provided by residues 229–231 (RDE) and Q238. H456 contacts L-aspartate. E490 is a binding site for ATP. An L-aspartate-binding site is contributed by R497. Residue 542–545 (GLDR) coordinates ATP.

It belongs to the class-II aminoacyl-tRNA synthetase family. Type 1 subfamily. As to quaternary structure, homodimer.

It is found in the cytoplasm. The enzyme catalyses tRNA(Asx) + L-aspartate + ATP = L-aspartyl-tRNA(Asx) + AMP + diphosphate. In terms of biological role, aspartyl-tRNA synthetase with relaxed tRNA specificity since it is able to aspartylate not only its cognate tRNA(Asp) but also tRNA(Asn). Reaction proceeds in two steps: L-aspartate is first activated by ATP to form Asp-AMP and then transferred to the acceptor end of tRNA(Asp/Asn). This chain is Aspartate--tRNA(Asp/Asn) ligase, found in Protochlamydia amoebophila (strain UWE25).